A 500-amino-acid polypeptide reads, in one-letter code: Cysteine--tRNA ligase (500 aa).

Cys-29 contributes to the Zn(2+) binding site. The short motif at 31–41 is the 'HIGH' region element; the sequence is VTVYDLCHLGH. 3 residues coordinate Zn(2+): Cys-213, His-238, and Glu-242. Positions 270 to 274 match the 'KMSKS' region motif; the sequence is KMSKS. Residue Lys-273 coordinates ATP.

This sequence belongs to the class-I aminoacyl-tRNA synthetase family. As to quaternary structure, monomer. It depends on Zn(2+) as a cofactor.

The protein localises to the cytoplasm. It carries out the reaction tRNA(Cys) + L-cysteine + ATP = L-cysteinyl-tRNA(Cys) + AMP + diphosphate. The protein is Cysteine--tRNA ligase of Prochlorococcus marinus (strain NATL1A).